A 215-amino-acid polypeptide reads, in one-letter code: Jasmonate monooxygenase ABM (215 aa).

Residues 2-90 (FAVIFETRPQ…GVLEDYHLRV (89 aa)) enclose the ABM domain.

The protein localises to the endoplasmic reticulum. The protein resides in the secreted. It carries out the reaction jasmonate + NADPH + O2 + H(+) = (1R,2R)-12-hydroxyjasmonate + NADP(+) + H2O. Monooxygenase that converts the endogenous (and likely the host) jasmonate (JA) to its hydroxylated derivative 12-hydroxyjasmonate (12OH-JA), also known as tuberonic acid, a compound that attenuates or disables jasmonate-based host innate immunity and which is essential for proper initiation and elaboration of the blast disease in rice. ABM, together with a polyketide synthase MGG_04775 and the esterase MGG_04774, share the secondary metabolism gene cluster with ABC transporter ABC3, and therefore may also be involved in the synthesis of other important metabolites such as the ABC3 transporter efflux substrate (ATS) and/or additional polyketides. The polypeptide is Jasmonate monooxygenase ABM (Pyricularia oryzae (strain 70-15 / ATCC MYA-4617 / FGSC 8958) (Rice blast fungus)).